A 366-amino-acid polypeptide reads, in one-letter code: NADH-quinone oxidoreductase subunit D (366 aa).

This sequence belongs to the complex I 49 kDa subunit family. As to quaternary structure, NDH-1 is composed of 14 different subunits. Subunits NuoB, C, D, E, F, and G constitute the peripheral sector of the complex.

Its subcellular location is the cell membrane. The catalysed reaction is a quinone + NADH + 5 H(+)(in) = a quinol + NAD(+) + 4 H(+)(out). In terms of biological role, NDH-1 shuttles electrons from NADH, via FMN and iron-sulfur (Fe-S) centers, to quinones in the respiratory chain. The immediate electron acceptor for the enzyme in this species is believed to be a menaquinone. Couples the redox reaction to proton translocation (for every two electrons transferred, four hydrogen ions are translocated across the cytoplasmic membrane), and thus conserves the redox energy in a proton gradient. In Bacillus mycoides (strain KBAB4) (Bacillus weihenstephanensis), this protein is NADH-quinone oxidoreductase subunit D.